Consider the following 336-residue polypeptide: Translation initiation factor eIF2 assembly protein (336 aa).

Ser-60 bears the Phosphoserine mark. The ATP site is built by Lys-104, Trp-107, Ala-109, Arg-111, Arg-167, Lys-168, Trp-169, Cys-170, Glu-177, Arg-179, Arg-193, Asp-233, Asp-246, and Asn-248. Residues Asp-246 and Asn-248 each contribute to the Mg(2+) site.

It belongs to the CDC123 family. Interacts with the eIF2 complex gamma subunit EIF2S3 (via C-terminus); the interaction is direct. Interacts with the eIF2 complex alpha subunit EIF2S1. Interacts with the eIF2 complex beta subunit EIF2S2. In terms of tissue distribution, widely expressed. Expressed in spleen, thymus, prostate, testis, ovary, small intestine, colon and leukocytes with the highest expression in testis.

The protein resides in the cytoplasm. Functionally, ATP-dependent protein-folding chaperone for the eIF2 complex. Binds to the gamma subunit of the eIF2 complex which allows the subunit to assemble with the alpha and beta subunits. The sequence is that of Translation initiation factor eIF2 assembly protein (CDC123) from Homo sapiens (Human).